The following is a 199-amino-acid chain: Crossover junction endodeoxyribonuclease RuvC (199 aa).

Catalysis depends on residues D7, E68, and D141. Positions 7, 68, and 141 each coordinate Mg(2+).

It belongs to the RuvC family. In terms of assembly, homodimer which binds Holliday junction (HJ) DNA. The HJ becomes 2-fold symmetrical on binding to RuvC with unstacked arms; it has a different conformation from HJ DNA in complex with RuvA. In the full resolvosome a probable DNA-RuvA(4)-RuvB(12)-RuvC(2) complex forms which resolves the HJ. Mg(2+) serves as cofactor.

Its subcellular location is the cytoplasm. The catalysed reaction is Endonucleolytic cleavage at a junction such as a reciprocal single-stranded crossover between two homologous DNA duplexes (Holliday junction).. In terms of biological role, the RuvA-RuvB-RuvC complex processes Holliday junction (HJ) DNA during genetic recombination and DNA repair. Endonuclease that resolves HJ intermediates. Cleaves cruciform DNA by making single-stranded nicks across the HJ at symmetrical positions within the homologous arms, yielding a 5'-phosphate and a 3'-hydroxyl group; requires a central core of homology in the junction. The consensus cleavage sequence is 5'-(A/T)TT(C/G)-3'. Cleavage occurs on the 3'-side of the TT dinucleotide at the point of strand exchange. HJ branch migration catalyzed by RuvA-RuvB allows RuvC to scan DNA until it finds its consensus sequence, where it cleaves and resolves the cruciform DNA. This chain is Crossover junction endodeoxyribonuclease RuvC, found in Saccharopolyspora erythraea (strain ATCC 11635 / DSM 40517 / JCM 4748 / NBRC 13426 / NCIMB 8594 / NRRL 2338).